A 114-amino-acid chain; its full sequence is Ig heavy chain V region GOM (114 aa).

An Ig-like domain is found at Glu-1–Val-112.

In Canis lupus familiaris (Dog), this protein is Ig heavy chain V region GOM.